The chain runs to 289 residues: 2-dehydro-3-deoxyphosphooctonate aldolase (289 aa).

Belongs to the KdsA family.

It localises to the cytoplasm. The enzyme catalyses D-arabinose 5-phosphate + phosphoenolpyruvate + H2O = 3-deoxy-alpha-D-manno-2-octulosonate-8-phosphate + phosphate. It participates in carbohydrate biosynthesis; 3-deoxy-D-manno-octulosonate biosynthesis; 3-deoxy-D-manno-octulosonate from D-ribulose 5-phosphate: step 2/3. Its pathway is bacterial outer membrane biogenesis; lipopolysaccharide biosynthesis. This is 2-dehydro-3-deoxyphosphooctonate aldolase from Cupriavidus taiwanensis (strain DSM 17343 / BCRC 17206 / CCUG 44338 / CIP 107171 / LMG 19424 / R1) (Ralstonia taiwanensis (strain LMG 19424)).